Reading from the N-terminus, the 327-residue chain is Deaminated glutathione amidase (327 aa).

A mitochondrion-targeting transit peptide spans 1–36; sequence MLGFITRPPHQLLSLLCTGYRLPQISVLCTQPRPRA. The CN hydrolase domain occupies 47–299; sequence LPLVAVCQVT…PGLCLARIDL (253 aa). Glu-87 serves as the catalytic Proton acceptor. Lys-162 functions as the Proton donor in the catalytic mechanism. Catalysis depends on Cys-204, which acts as the Nucleophile.

This sequence belongs to the carbon-nitrogen hydrolase superfamily. NIT1/NIT2 family.

Its subcellular location is the mitochondrion. The protein resides in the cytoplasm. It catalyses the reaction N-(4-oxoglutaryl)-L-cysteinylglycine + H2O = L-cysteinylglycine + 2-oxoglutarate. In terms of biological role, catalyzes the hydrolysis of the amide bond in N-(4-oxoglutarate)-L-cysteinylglycine (deaminated glutathione), a metabolite repair reaction to dispose of the harmful deaminated glutathione. Plays a role in cell growth and apoptosis: loss of expression promotes cell growth, resistance to DNA damage stress and increased incidence to NMBA-induced tumors. Has tumor suppressor properties that enhances the apoptotic responsiveness in cancer cells; this effect is additive to the tumor suppressor activity of FHIT. It is also a negative regulator of primary T-cells. The chain is Deaminated glutathione amidase (Nit1) from Rattus norvegicus (Rat).